The chain runs to 508 residues: NADH-quinone oxidoreductase subunit N 2 (508 aa).

Transmembrane regions (helical) follow at residues 14 to 34, 43 to 63, 90 to 110, 119 to 139, 144 to 164, 179 to 199, 223 to 243, 275 to 295, 298 to 318, 327 to 347, 353 to 373, 400 to 420, 433 to 455, and 473 to 493; these read SYVA…VIVL, SLVW…WYTA, FTFF…LLSA, GAHM…MFMV, LLTI…LAGI, FLTG…IYGV, GPAL…GFGF, GAAM…APFT, WALI…LVAL, MAYS…ASGL, ISSV…IFAV, AWAL…VGFL, GYLW…YYRV, and TGIS…TIFA.

Belongs to the complex I subunit 2 family. In terms of assembly, NDH-1 is composed of 14 different subunits. Subunits NuoA, H, J, K, L, M, N constitute the membrane sector of the complex.

It localises to the cell membrane. It carries out the reaction a quinone + NADH + 5 H(+)(in) = a quinol + NAD(+) + 4 H(+)(out). In terms of biological role, NDH-1 shuttles electrons from NADH, via FMN and iron-sulfur (Fe-S) centers, to quinones in the respiratory chain. The immediate electron acceptor for the enzyme in this species is believed to be a menaquinone. Couples the redox reaction to proton translocation (for every two electrons transferred, four hydrogen ions are translocated across the cytoplasmic membrane), and thus conserves the redox energy in a proton gradient. The chain is NADH-quinone oxidoreductase subunit N 2 from Symbiobacterium thermophilum (strain DSM 24528 / JCM 14929 / IAM 14863 / T).